Here is a 285-residue protein sequence, read N- to C-terminus: Sulfur carrier protein TtuD (285 aa).

2 Rhodanese domains span residues 20–127 and 161–281; these read EDPK…PLTT and KEGK…VPIA. A Cysteine persulfide modification is found at Cys-240.

In terms of processing, cys-240 can accept a sulfur atom as persulfide forms from cysteine desulfurases IscS and SufS.

Its pathway is tRNA modification. Functionally, required for the efficient 2-thiolation of 5-methyluridine residue at position 54 in the T loop of tRNAs, leading to 5-methyl-2-thiouridine (m(5)s(2)U or s(2)T). TtuD is a sulfur carrier protein that has a role to direct sulfur flow from cysteine desulfurases to m(5)s(2)U synthesis in vivo. It enhances the cysteine desulfurase activity of IscS and SufS, as well as the formation of thiocarboxylated TtuB (TtuB-COSH) in the presence of these desulfurases. In Thermus thermophilus (strain ATCC BAA-163 / DSM 7039 / HB27), this protein is Sulfur carrier protein TtuD.